The sequence spans 471 residues: Ribulose bisphosphate carboxylase large chain (471 aa).

Substrate is bound by residues N115 and T165. Residue K167 is the Proton acceptor of the active site. K169 provides a ligand contact to substrate. Residues K193, D195, and E196 each coordinate Mg(2+). Position 193 is an N6-carboxylysine (K193). H286 serves as the catalytic Proton acceptor. Residues R287, H319, and S371 each contribute to the substrate site.

This sequence belongs to the RuBisCO large chain family. Type I subfamily. In terms of assembly, heterohexadecamer of 8 large chains and 8 small chains. Mg(2+) is required as a cofactor.

The protein localises to the carboxysome. The enzyme catalyses 2 (2R)-3-phosphoglycerate + 2 H(+) = D-ribulose 1,5-bisphosphate + CO2 + H2O. The catalysed reaction is D-ribulose 1,5-bisphosphate + O2 = 2-phosphoglycolate + (2R)-3-phosphoglycerate + 2 H(+). RuBisCO catalyzes two reactions: the carboxylation of D-ribulose 1,5-bisphosphate, the primary event in carbon dioxide fixation, as well as the oxidative fragmentation of the pentose substrate in the photorespiration process. Both reactions occur simultaneously and in competition at the same active site. This is Ribulose bisphosphate carboxylase large chain from Synechococcus sp. (strain WH7803).